Reading from the N-terminus, the 357-residue chain is 3-isopropylmalate dehydrogenase (357 aa).

76–89 (GPKWDNEPSHNRPE) is a binding site for NAD(+). Substrate is bound by residues R96, R106, R135, and D223. Positions 223, 247, and 251 each coordinate Mg(2+). Residue 281-293 (GSAPDIAGQDKAN) participates in NAD(+) binding.

Belongs to the isocitrate and isopropylmalate dehydrogenases family. LeuB type 1 subfamily. Homodimer. The cofactor is Mg(2+). Requires Mn(2+) as cofactor.

The protein localises to the cytoplasm. The catalysed reaction is (2R,3S)-3-isopropylmalate + NAD(+) = 4-methyl-2-oxopentanoate + CO2 + NADH. It functions in the pathway amino-acid biosynthesis; L-leucine biosynthesis; L-leucine from 3-methyl-2-oxobutanoate: step 3/4. In terms of biological role, catalyzes the oxidation of 3-carboxy-2-hydroxy-4-methylpentanoate (3-isopropylmalate) to 3-carboxy-4-methyl-2-oxopentanoate. The product decarboxylates to 4-methyl-2 oxopentanoate. This is 3-isopropylmalate dehydrogenase from Helicobacter hepaticus (strain ATCC 51449 / 3B1).